We begin with the raw amino-acid sequence, 236 residues long: RING-H2 finger protein ATL7 (236 aa).

Residues Ala-31–Ile-51 traverse the membrane as a helical segment. An RING-type; atypical zinc finger spans residues Cys-111–Arg-153. Positions Glu-176–Ile-196 are enriched in polar residues. Residues Glu-176–Gly-236 are disordered. Over residues Ser-197–Arg-221 the composition is skewed to basic and acidic residues.

The protein belongs to the RING-type zinc finger family. ATL subfamily.

It is found in the membrane. It carries out the reaction S-ubiquitinyl-[E2 ubiquitin-conjugating enzyme]-L-cysteine + [acceptor protein]-L-lysine = [E2 ubiquitin-conjugating enzyme]-L-cysteine + N(6)-ubiquitinyl-[acceptor protein]-L-lysine.. It participates in protein modification; protein ubiquitination. The sequence is that of RING-H2 finger protein ATL7 (ATL7) from Arabidopsis thaliana (Mouse-ear cress).